Reading from the N-terminus, the 510-residue chain is NAD(P)H-quinone oxidoreductase subunit 2, chloroplastic (510 aa).

11 helical membrane-spanning segments follow: residues 24–44, 59–79, 99–119, 124–144, 149–169, 183–203, 295–315, 323–343, 347–367, 395–415, and 418–438; these read LLLF…GLIL, WFYF…LFRW, IFQF…VEYI, MAIT…MFLC, LITI…LSGY, YLLM…WLYG, WHLL…LIAI, MLAY…IVGD, GYAS…GTFA, ALSS…AGFF, and LYLF…IGLL.

The protein belongs to the complex I subunit 2 family. As to quaternary structure, NDH is composed of at least 16 different subunits, 5 of which are encoded in the nucleus.

Its subcellular location is the plastid. The protein localises to the chloroplast thylakoid membrane. It catalyses the reaction a plastoquinone + NADH + (n+1) H(+)(in) = a plastoquinol + NAD(+) + n H(+)(out). The catalysed reaction is a plastoquinone + NADPH + (n+1) H(+)(in) = a plastoquinol + NADP(+) + n H(+)(out). NDH shuttles electrons from NAD(P)H:plastoquinone, via FMN and iron-sulfur (Fe-S) centers, to quinones in the photosynthetic chain and possibly in a chloroplast respiratory chain. The immediate electron acceptor for the enzyme in this species is believed to be plastoquinone. Couples the redox reaction to proton translocation, and thus conserves the redox energy in a proton gradient. The sequence is that of NAD(P)H-quinone oxidoreductase subunit 2, chloroplastic from Asparagus officinalis (Garden asparagus).